The following is a 208-amino-acid chain: FMN-dependent NADH:quinone oxidoreductase 4 (208 aa).

Belongs to the azoreductase type 1 family. Homodimer. The cofactor is FMN.

It catalyses the reaction 2 a quinone + NADH + H(+) = 2 a 1,4-benzosemiquinone + NAD(+). It carries out the reaction N,N-dimethyl-1,4-phenylenediamine + anthranilate + 2 NAD(+) = 2-(4-dimethylaminophenyl)diazenylbenzoate + 2 NADH + 2 H(+). Functionally, quinone reductase that provides resistance to thiol-specific stress caused by electrophilic quinones. In terms of biological role, also exhibits azoreductase activity. Catalyzes the reductive cleavage of the azo bond in aromatic azo compounds to the corresponding amines. This chain is FMN-dependent NADH:quinone oxidoreductase 4, found in Bacillus cereus (strain ATCC 10987 / NRS 248).